The chain runs to 116 residues: MLSCRLQCALALLSIALAVGTVSAAPSDPRLRQFLQKSLAAAAGKQELAKYFLAELLSEPSQTENEALESEDLSRGAEQDEVRLELERSANSNPALAPRERKAGCKNFFWKTFTSC.

Positions 1–24 are cleaved as a signal peptide; it reads MLSCRLQCALALLSIALAVGTVSA. A propeptide spanning residues 25-88 is cleaved from the precursor; it reads APSDPRLRQF…QDEVRLELER (64 aa). Residues 60 to 82 form a disordered region; it reads PSQTENEALESEDLSRGAEQDEV. Residues 72 to 82 are compositionally biased toward basic and acidic residues; that stretch reads DLSRGAEQDEV. An intrachain disulfide couples Cys-105 to Cys-116.

Belongs to the somatostatin family.

Its subcellular location is the secreted. In terms of biological role, somatostatin inhibits the release of somatotropin. The polypeptide is Somatostatin (SST) (Gallus gallus (Chicken)).